Reading from the N-terminus, the 405-residue chain is Putative colanic acid biosynthesis glycosyl transferase WcaC (405 aa).

It participates in slime biogenesis; slime polysaccharide biosynthesis. The chain is Putative colanic acid biosynthesis glycosyl transferase WcaC (wcaC) from Escherichia coli (strain K12).